The sequence spans 4262 residues: Polyketide synthase PksM (4262 aa).

The segment at 1 to 114 (MITEQLHISL…ADMHRKEQTA (114 aa)) is N-terminal hotdog fold 1. The region spanning 1–271 (MITEQLHISL…GKSVRNMSAF (271 aa)) is the PKS/mFAS DH 1 domain. His-18 acts as the Proton acceptor; for dehydratase activity 1 in catalysis. Positions 129-271 (DRILNLDEIY…GKSVRNMSAF (143 aa)) are C-terminal hotdog fold 1. Asp-190 serves as the catalytic Proton donor; for dehydratase activity 1. Residues 293–367 (PAFEMYLRQL…ELAAHLADHY (75 aa)) form the Carrier 1 domain. At Ser-327 the chain carries O-(pantetheine 4'-phosphoryl)serine. One can recognise a Ketosynthase family 3 (KS3) 1 domain in the interval 393 to 831 (GEDIAIIGMA…GSNAHLILEE (439 aa)). Active-site for beta-ketoacyl synthase 1 activity residues include Cys-569, His-704, and His-744. An N-terminal hotdog fold 2 region spans residues 1009–1135 (HPLVHRNTSD…GRAVISDEAE (127 aa)). Positions 1009-1301 (HPLVHRNTSD…MRALDGEQHS (293 aa)) constitute a PKS/mFAS DH 2 domain. The active-site Proton acceptor; for dehydratase activity 2 is the His-1038. Residues 1149–1301 (SLDTVTSEQC…MRALDGEQHS (153 aa)) form a C-terminal hotdog fold 2 region. Asp-1211 acts as the Proton donor; for dehydratase activity 2 in catalysis. The region spanning 2188–2261 (EKSTEYMKKL…ALVEHFIKTK (74 aa)) is the Carrier 2 domain. Ser-2222 bears the O-(pantetheine 4'-phosphoryl)serine mark. Polar residues predominate over residues 2275-2291 (VQQHTPAESRTQSSQKP). Residues 2275 to 2313 (VQQHTPAESRTQSSQKPDQAAKRTRRFRKLGFSGEKETP) form a disordered region. The 416-residue stretch at 2319–2734 (SRDVAVIGIS…GSNAHIILEE (416 aa)) folds into the Ketosynthase family 3 (KS3) 2 domain. Residues Cys-2476, His-2611, and His-2651 each act as for beta-ketoacyl synthase 2 activity in the active site. A coiled-coil region spans residues 2750 to 2826 (ALIVLSAKNM…DFIENKADSL (77 aa)). Residues 3409 to 3486 (SIEKRLEHDL…ELISFFLTDH (78 aa)) form the Carrier 3 domain. Ser-3446 is subject to O-(pantetheine 4'-phosphoryl)serine. One can recognise a Ketosynthase family 3 (KS3) 3 domain in the interval 3529-3944 (DEPIAIIGMS…GTNAHAVIEE (416 aa)). Active-site for beta-ketoacyl synthase 3 activity residues include Cys-3690, His-3825, and His-3865. Residues 4004-4033 (KAMEARLAIVANNQEQLVRKLKEYVEAMKN) are a coiled coil. The Carrier 4 domain maps to 4135 to 4212 (NGKTHIQKII…ALSDHLALKA (78 aa)). Ser-4172 is modified (O-(pantetheine 4'-phosphoryl)serine).

Requires pantetheine 4'-phosphate as cofactor.

Its subcellular location is the cytoplasm. It participates in antibiotic biosynthesis; bacillaene biosynthesis. Functionally, involved in some intermediate steps for the synthesis of the antibiotic polyketide bacillaene which is involved in secondary metabolism. The polypeptide is Polyketide synthase PksM (pksM) (Bacillus subtilis (strain 168)).